A 500-amino-acid chain; its full sequence is NAD(P)H-quinone oxidoreductase chain 4, chloroplastic (500 aa).

A run of 14 helical transmembrane segments spans residues 4 to 24 (FPWL…IFFL), 35 to 55 (YTIC…CYHF), 87 to 107 (IGPI…AWPV), 113 to 130 (LFHF…GLFS), 134 to 154 (LLLF…LLAM), 167 to 187 (FILY…GVAL), 208 to 228 (VLEI…SPII), 242 to 262 (HYST…YGLI), 272 to 292 (AHSI…IYAA), 305 to 325 (IAYS…SLTD), 330 to 350 (GALL…FLAG), 386 to 406 (LALP…GIIT), 416 to 436 (LLIT…SLSM), and 462 to 482 (LFLS…PDFV).

It belongs to the complex I subunit 4 family.

It is found in the plastid. Its subcellular location is the chloroplast thylakoid membrane. The enzyme catalyses a plastoquinone + NADH + (n+1) H(+)(in) = a plastoquinol + NAD(+) + n H(+)(out). It carries out the reaction a plastoquinone + NADPH + (n+1) H(+)(in) = a plastoquinol + NADP(+) + n H(+)(out). This is NAD(P)H-quinone oxidoreductase chain 4, chloroplastic from Solanum lycopersicum (Tomato).